The chain runs to 322 residues: Sideroflexin-1 (322 aa).

Ser2 is modified (N-acetylserine). The Mitochondrial matrix portion of the chain corresponds to 2-102 (SGEVPPNINI…MSAQVPMNMT (101 aa)). A helical membrane pass occupies residues 103 to 120 (ITGCMMTFYRTTPAVLFW). The Mitochondrial intermembrane portion of the chain corresponds to 121–146 (QWINQSFNAVVNYTNRSGDAPLTVNE). Residues 147-167 (LGTAYVSATTGAVATALGLNA) form a helical membrane-spanning segment. The Mitochondrial matrix portion of the chain corresponds to 168-174 (LTKRVSP). Residues 175–195 (LIGRFVPFAAVAAANCINIPL) traverse the membrane as a helical segment. At 196-228 (MRQRELKVGIPVTDENGTRLGESTNAAKQAITQ) the chain is on the mitochondrial intermembrane side. Residues 229–249 (VVISRILMAAPGMAIPPFIMN) form a helical membrane-spanning segment. Topologically, residues 250–266 (TLEKKAFLKRFPWMSAP) are mitochondrial matrix. Residues 267 to 287 (IQVTLVGFCLVFATPLCCALF) traverse the membrane as a helical segment. The Mitochondrial intermembrane segment spans residues 288-322 (PQKSSMSVTSLEDELQASIQRTHPEIRRVYFNKGL).

Belongs to the sideroflexin family. In terms of tissue distribution, widely expressed, with highest expression in kidney and liver.

It is found in the mitochondrion inner membrane. The enzyme catalyses L-serine(in) = L-serine(out). It carries out the reaction L-alanine(in) = L-alanine(out). It catalyses the reaction L-cysteine(in) = L-cysteine(out). Amino acid transporter importing serine, an essential substrate of the mitochondrial branch of the one-carbon pathway, into mitochondria. Mitochondrial serine is then converted to glycine and formate, which exits to the cytosol where it is used to generate the charged folates that serve as one-carbon donors. May also transport other amino acids including alanine and cysteine. This chain is Sideroflexin-1, found in Mus musculus (Mouse).